Consider the following 372-residue polypeptide: Mevalonate 3,5-bisphosphate decarboxylase (372 aa).

This sequence belongs to the mevalonate 3,5-bisphosphate decarboxylase family. As to quaternary structure, homodimer.

It carries out the reaction (R)-3,5-bisphosphomevalonate + H(+) = isopentenyl phosphate + phosphate + CO2. It functions in the pathway isoprenoid biosynthesis; isopentenyl diphosphate biosynthesis via mevalonate pathway. Catalyzes the ATP-independent decarboxylation of (R)-mevalonate 3,5-bisphosphate to isopentenyl phosphate. Functions in an alternative mevalonate pathway, only present in extreme acidophiles of the Thermoplasmatales order, which passes through mevalonate 3-phosphate rather than mevalonate 5-phosphate. The sequence is that of Mevalonate 3,5-bisphosphate decarboxylase from Thermoplasma volcanium (strain ATCC 51530 / DSM 4299 / JCM 9571 / NBRC 15438 / GSS1).